A 400-amino-acid polypeptide reads, in one-letter code: Argininosuccinate synthase (400 aa).

ATP-binding positions include 9-17 (AYSGGVDTS) and alanine 37. Residue tyrosine 88 coordinates L-citrulline. ATP is bound at residue glycine 118. L-aspartate-binding residues include threonine 120, asparagine 124, and aspartate 125. Asparagine 124 is an L-citrulline binding site. 5 residues coordinate L-citrulline: arginine 128, serine 176, serine 185, glutamate 261, and tyrosine 273.

Belongs to the argininosuccinate synthase family. Type 1 subfamily. Homotetramer.

Its subcellular location is the cytoplasm. The enzyme catalyses L-citrulline + L-aspartate + ATP = 2-(N(omega)-L-arginino)succinate + AMP + diphosphate + H(+). Its pathway is amino-acid biosynthesis; L-arginine biosynthesis; L-arginine from L-ornithine and carbamoyl phosphate: step 2/3. This is Argininosuccinate synthase from Prochlorococcus marinus (strain MIT 9211).